The primary structure comprises 270 residues: MISRRRFLQATAATIATSSGFGYMHYCEPGWFELIRHRLAFFKDNAAPFKILFLADLHYSRFVPLSLISDAIALGIEQKPDLILLGGDYVLFDMSLNFSAFSDVLSPLAECAPTFACFGNHDRPVGTEKNHLIGETLKSAGITVLFNQATVIATPNRQFELVGTGDLWAGQCKPPPASEANLPRLVLAHNPDSKEVMRDEPWDLMLCGHTHGGQLRVPLVGEPFAPVEDKRYVAGLNAFGERHIYTTRGVGSLYGLRLNCRPEVTMLELV.

Residues D56, H58, D88, N120, H209, and H211 each contribute to the a divalent metal cation site.

Belongs to the metallophosphoesterase superfamily. It depends on a divalent metal cation as a cofactor.

Its function is as follows. Shows phosphodiesterase activity, hydrolyzing phosphodiester bond in the artificial chromogenic substrate bis-p-nitrophenyl phosphate (bis-pNPP). This Escherichia coli (strain K12) protein is Phosphodiesterase YaeI (yaeI).